The following is a 241-amino-acid chain: GTP cyclohydrolase 1 type 2 homolog (241 aa).

Residues histidine 62, histidine 63, aspartate 101, histidine 207, and glutamate 211 each contribute to the a divalent metal cation site.

The protein belongs to the GTP cyclohydrolase I type 2/NIF3 family. In terms of assembly, homohexamer.

In Campylobacter jejuni subsp. jejuni serotype O:2 (strain ATCC 700819 / NCTC 11168), this protein is GTP cyclohydrolase 1 type 2 homolog.